The primary structure comprises 209 residues: MDTNHPGSAGGRGGLGSIFGGGPPGYSHSDLAGVPLTGMSPLSPYLNVDPMYLVQDTDEFILPTGANKTRGRFELAFFTIGGCCISGAAFGALNGLKLGFKETQNMPWSKPKNVQILNMVTRQGALWANTLGSLALLYSAFGVIVEKTRGAEDDLNTIAAGTMTGMLYKSTGGLRGVARGGLAGLALASTFALYNNWEHIKGSSSQVSL.

3 helical membrane passes run 73–93 (FELA…FGAL), 125–145 (ALWA…GVIV), and 180–200 (GGLA…WEHI).

The protein belongs to the Tim17/Tim22/Tim23 family. In terms of assembly, component of the TIM23 complex at least composed of timm23, timm17 and timm50. The complex interacts with the timm44 component of the PAM complex.

Its subcellular location is the mitochondrion inner membrane. Functionally, essential component of the TIM23 complex, a complex that mediates the translocation of transit peptide-containing proteins across the mitochondrial inner membrane. This is Mitochondrial import inner membrane translocase subunit Tim23 (timm23) from Xenopus laevis (African clawed frog).